The sequence spans 481 residues: Pyruvate kinase (481 aa).

Arginine 36 contributes to the substrate binding site. Positions 38, 40, and 70 each coordinate K(+). Residue 38 to 41 coordinates ATP; it reads NFSH. ATP-binding residues include arginine 77 and lysine 160. Glutamate 225 contacts Mg(2+). Glycine 251, aspartate 252, and threonine 284 together coordinate substrate. Mg(2+) is bound at residue aspartate 252.

The protein belongs to the pyruvate kinase family. As to quaternary structure, homotetramer. Mg(2+) serves as cofactor. It depends on K(+) as a cofactor.

The enzyme catalyses pyruvate + ATP = phosphoenolpyruvate + ADP + H(+). The protein operates within carbohydrate degradation; glycolysis; pyruvate from D-glyceraldehyde 3-phosphate: step 5/5. With respect to regulation, allosterically activated by AMP and by several sugar phosphates. Belongs to type II PK. This chain is Pyruvate kinase (pykA), found in Buchnera aphidicola subsp. Schizaphis graminum (strain Sg).